The chain runs to 420 residues: Tyrosine--tRNA ligase (420 aa).

Y33 contributes to the L-tyrosine binding site. The short motif at P38–H47 is the 'HIGH' region element. Y167 and Q171 together coordinate L-tyrosine. The short motif at K227–T231 is the 'KMSKS' region element. An ATP-binding site is contributed by K230. Positions L353–V419 constitute an S4 RNA-binding domain.

Belongs to the class-I aminoacyl-tRNA synthetase family. TyrS type 1 subfamily. Homodimer.

Its subcellular location is the cytoplasm. The catalysed reaction is tRNA(Tyr) + L-tyrosine + ATP = L-tyrosyl-tRNA(Tyr) + AMP + diphosphate + H(+). Functionally, catalyzes the attachment of tyrosine to tRNA(Tyr) in a two-step reaction: tyrosine is first activated by ATP to form Tyr-AMP and then transferred to the acceptor end of tRNA(Tyr). The sequence is that of Tyrosine--tRNA ligase from Anaeromyxobacter dehalogenans (strain 2CP-1 / ATCC BAA-258).